The sequence spans 263 residues: Phosphatidylglycerol--prolipoprotein diacylglyceryl transferase (263 aa).

4 consecutive transmembrane segments (helical) span residues 6–26 (VIFS…VLGI), 50–70 (LLTA…VLIY), 85–105 (TWEG…AVII), and 112–132 (IPTF…LFLG). Arginine 133 is a binding site for a 1,2-diacyl-sn-glycero-3-phospho-(1'-sn-glycerol). The next 3 membrane-spanning stretches (helical) occupy residues 169-189 (LYEA…LFFL), 197-217 (GALT…VEFF), and 233-253 (MGQL…LGAL).

This sequence belongs to the Lgt family.

Its subcellular location is the cell membrane. The enzyme catalyses L-cysteinyl-[prolipoprotein] + a 1,2-diacyl-sn-glycero-3-phospho-(1'-sn-glycerol) = an S-1,2-diacyl-sn-glyceryl-L-cysteinyl-[prolipoprotein] + sn-glycerol 1-phosphate + H(+). It functions in the pathway protein modification; lipoprotein biosynthesis (diacylglyceryl transfer). Functionally, catalyzes the transfer of the diacylglyceryl group from phosphatidylglycerol to the sulfhydryl group of the N-terminal cysteine of a prolipoprotein, the first step in the formation of mature lipoproteins. The polypeptide is Phosphatidylglycerol--prolipoprotein diacylglyceryl transferase (Wolbachia pipientis wMel).